The sequence spans 478 residues: Isoeugenol monooxygenase (478 aa).

Residues H167, H218, H282, and H471 each coordinate Fe cation.

This sequence belongs to the carotenoid oxygenase family. In terms of assembly, monomer. It depends on Fe(2+) as a cofactor.

It catalyses the reaction (E)-isoeugenol + O2 = vanillin + acetaldehyde. With respect to regulation, inhibited by HgCl(2), AgNO(3), CuCl(2), phenylhydrazine, 8-hydroxyquinoline, R-cycloserine and p-chloromercuribenzoic acid. Its function is as follows. Involved in isoeugenol degradation. Catalyzes the oxidative cleavage of the side chain double-bond of isoeugenol to form vanillin and acetaldehyde. The polypeptide is Isoeugenol monooxygenase (Pseudomonas putida (Arthrobacter siderocapsulatus)).